The following is a 444-amino-acid chain: UDP-N-acetylmuramoylalanine--D-glutamate ligase (444 aa).

ATP is bound at residue 113–119 (GSNGKST).

The protein belongs to the MurCDEF family.

The protein localises to the cytoplasm. The enzyme catalyses UDP-N-acetyl-alpha-D-muramoyl-L-alanine + D-glutamate + ATP = UDP-N-acetyl-alpha-D-muramoyl-L-alanyl-D-glutamate + ADP + phosphate + H(+). The protein operates within cell wall biogenesis; peptidoglycan biosynthesis. In terms of biological role, cell wall formation. Catalyzes the addition of glutamate to the nucleotide precursor UDP-N-acetylmuramoyl-L-alanine (UMA). This chain is UDP-N-acetylmuramoylalanine--D-glutamate ligase, found in Blochmanniella floridana.